Here is a 395-residue protein sequence, read N- to C-terminus: Calreticulin (395 aa).

An N-terminal signal peptide occupies residues 1 to 15 (MKSLCLLAIVAVVSA). An intrachain disulfide couples Cys101 to Cys133. Residues Tyr105, Lys107, Tyr124, and Asp131 each coordinate an alpha-D-glucoside. Tandem repeats lie at residues 186–197 (AQTGSLEEDWDL), 205–216 (DPDAKKPEDWDE), 222–233 (DAEDAKPEDWEK), 239–250 (DPDAKKPEDWDD), 254–264 (GEWEPPMIDNP), 268–278 (GEWKPKQIKNP), and 282–292 (GKWIHPEIENP). The 4 X approximate repeats stretch occupies residues 186 to 250 (AQTGSLEEDW…DAKKPEDWDD (65 aa)). The interval 193–301 (EDWDLLPAKK…PEYTPDDELY (109 aa)) is P-domain. The span at 202–212 (KIKDPDAKKPE) shows a compositional bias: basic and acidic residues. A disordered region spans residues 202-255 (KIKDPDAKKPEDWDEREYIDDAEDAKPEDWEKPEHIPDPDAKKPEDWDDEMDGE). Acidic residues predominate over residues 213–224 (DWDEREYIDDAE). Residues 225 to 246 (DAKPEDWEKPEHIPDPDAKKPE) are compositionally biased toward basic and acidic residues. Residues 254–292 (GEWEPPMIDNPEYKGEWKPKQIKNPAYKGKWIHPEIENP) form a 3 X approximate repeats region. The tract at residues 302–395 (SYESWGAIGF…KEEEEGHDEL (94 aa)) is C-domain. Asp312 contacts an alpha-D-glucoside. A compositionally biased stretch (basic and acidic residues) spans 340-380 (ETFDKLKTVEKEKKEKADEETRKAEEEARKKAEEEKEAKKD). The interval 340 to 395 (ETFDKLKTVEKEKKEKADEETRKAEEEARKKAEEEKEAKKDDDEEEKEEEEGHDEL) is disordered. The span at 381 to 395 (DDEEEKEEEEGHDEL) shows a compositional bias: acidic residues. A Prevents secretion from ER motif is present at residues 392–395 (HDEL).

Belongs to the calreticulin family. In terms of processing, cleaved by caspase ced-3 in vitro.

The protein resides in the endoplasmic reticulum lumen. Functionally, molecular calcium-binding chaperone promoting folding, oligomeric assembly and quality control in the endoplasmic reticulum (ER) via the calreticulin/calnexin cycle. This lectin may interact transiently with almost all of the monoglucosylated glycoproteins that are synthesized in the ER. Probably by controlling the folding of extracellular matrix protein unc-52/Perlecan, may play a role in the formation of fibrous organelles, a hemidesmosome-like structure attaching muscles to the epidermis. Protects dopaminergic neurons against oxidative stress-induced neurodegeneration. May play a role in protection against ER stress. Plays a role in modulating lifespan, acting by influencing ER calcium homeostasis. This Caenorhabditis elegans protein is Calreticulin (crt-1).